Reading from the N-terminus, the 209-residue chain is Uridine kinase (209 aa).

12-19 (GGSASGKT) is a binding site for ATP.

The protein belongs to the uridine kinase family.

The protein localises to the cytoplasm. It catalyses the reaction uridine + ATP = UMP + ADP + H(+). The enzyme catalyses cytidine + ATP = CMP + ADP + H(+). Its pathway is pyrimidine metabolism; CTP biosynthesis via salvage pathway; CTP from cytidine: step 1/3. It participates in pyrimidine metabolism; UMP biosynthesis via salvage pathway; UMP from uridine: step 1/1. The sequence is that of Uridine kinase from Chloroflexus aggregans (strain MD-66 / DSM 9485).